Here is an 860-residue protein sequence, read N- to C-terminus: Valine--tRNA ligase (860 aa).

The 'HIGH' region signature appears at 43–53 (PTVSGALHVGH). The segment at 469–491 (LPVDPSSDAPTGYQESQRNQPGG) is disordered. Positions 574–578 (KMSKS) match the 'KMSKS' region motif. Residue Lys577 coordinates ATP.

Belongs to the class-I aminoacyl-tRNA synthetase family. ValS type 2 subfamily. In terms of assembly, monomer.

It is found in the cytoplasm. It catalyses the reaction tRNA(Val) + L-valine + ATP = L-valyl-tRNA(Val) + AMP + diphosphate. In terms of biological role, catalyzes the attachment of valine to tRNA(Val). As ValRS can inadvertently accommodate and process structurally similar amino acids such as threonine, to avoid such errors, it has a 'posttransfer' editing activity that hydrolyzes mischarged Thr-tRNA(Val) in a tRNA-dependent manner. This chain is Valine--tRNA ligase, found in Salinispora tropica (strain ATCC BAA-916 / DSM 44818 / JCM 13857 / NBRC 105044 / CNB-440).